Here is a 338-residue protein sequence, read N- to C-terminus: Uroporphyrinogen decarboxylase (338 aa).

Residues Arg-27–Arg-31, Asp-77, Tyr-151, Ser-203, and His-317 each bind substrate.

Belongs to the uroporphyrinogen decarboxylase family. Homodimer.

The protein resides in the cytoplasm. The catalysed reaction is uroporphyrinogen III + 4 H(+) = coproporphyrinogen III + 4 CO2. It participates in porphyrin-containing compound metabolism; protoporphyrin-IX biosynthesis; coproporphyrinogen-III from 5-aminolevulinate: step 4/4. Functionally, catalyzes the decarboxylation of four acetate groups of uroporphyrinogen-III to yield coproporphyrinogen-III. This Wolbachia sp. subsp. Drosophila simulans (strain wRi) protein is Uroporphyrinogen decarboxylase.